A 152-amino-acid polypeptide reads, in one-letter code: Transcriptional repressor NrdR (152 aa).

The segment at 3–33 (CSICKKGETSVVDSRPTEDGTAIRRRRLCVC) is a zinc-finger region. Positions 48–138 (IMVVKKNGRK…VYRNFREEKD (91 aa)) constitute an ATP-cone domain.

Belongs to the NrdR family. The cofactor is Zn(2+).

Functionally, negatively regulates transcription of bacterial ribonucleotide reductase nrd genes and operons by binding to NrdR-boxes. The sequence is that of Transcriptional repressor NrdR from Pelagibacter ubique (strain HTCC1062).